A 329-amino-acid chain; its full sequence is 4-hydroxythreonine-4-phosphate dehydrogenase (329 aa).

Residues H137 and T138 each coordinate substrate. H167, H212, and H267 together coordinate a divalent metal cation. 3 residues coordinate substrate: K275, N284, and R293.

Belongs to the PdxA family. As to quaternary structure, homodimer. Zn(2+) is required as a cofactor. The cofactor is Mg(2+). It depends on Co(2+) as a cofactor.

It localises to the cytoplasm. It carries out the reaction 4-(phosphooxy)-L-threonine + NAD(+) = 3-amino-2-oxopropyl phosphate + CO2 + NADH. Its pathway is cofactor biosynthesis; pyridoxine 5'-phosphate biosynthesis; pyridoxine 5'-phosphate from D-erythrose 4-phosphate: step 4/5. Functionally, catalyzes the NAD(P)-dependent oxidation of 4-(phosphooxy)-L-threonine (HTP) into 2-amino-3-oxo-4-(phosphooxy)butyric acid which spontaneously decarboxylates to form 3-amino-2-oxopropyl phosphate (AHAP). This chain is 4-hydroxythreonine-4-phosphate dehydrogenase, found in Stutzerimonas stutzeri (strain A1501) (Pseudomonas stutzeri).